The primary structure comprises 204 residues: UPF0637 protein lwe1043 (204 aa).

Belongs to the UPF0637 family.

In Listeria welshimeri serovar 6b (strain ATCC 35897 / DSM 20650 / CCUG 15529 / CIP 8149 / NCTC 11857 / SLCC 5334 / V8), this protein is UPF0637 protein lwe1043.